A 133-amino-acid polypeptide reads, in one-letter code: Small ribosomal subunit protein uS8 (133 aa).

It belongs to the universal ribosomal protein uS8 family. In terms of assembly, part of the 30S ribosomal subunit.

Functionally, one of the primary rRNA binding proteins, it binds directly to 16S rRNA central domain where it helps coordinate assembly of the platform of the 30S subunit. This Saccharolobus solfataricus (strain ATCC 35092 / DSM 1617 / JCM 11322 / P2) (Sulfolobus solfataricus) protein is Small ribosomal subunit protein uS8.